A 504-amino-acid polypeptide reads, in one-letter code: ATP synthase subunit alpha 2 (504 aa).

ATP is bound at residue 169–176 (GDRQTGKT).

This sequence belongs to the ATPase alpha/beta chains family. As to quaternary structure, F-type ATPases have 2 components, CF(1) - the catalytic core - and CF(0) - the membrane proton channel. CF(1) has five subunits: alpha(3), beta(3), gamma(1), delta(1), epsilon(1). CF(0) has three main subunits: a(1), b(2) and c(9-12). The alpha and beta chains form an alternating ring which encloses part of the gamma chain. CF(1) is attached to CF(0) by a central stalk formed by the gamma and epsilon chains, while a peripheral stalk is formed by the delta and b chains.

It localises to the cell membrane. It carries out the reaction ATP + H2O + 4 H(+)(in) = ADP + phosphate + 5 H(+)(out). In terms of biological role, produces ATP from ADP in the presence of a proton gradient across the membrane. The alpha chain is a regulatory subunit. The sequence is that of ATP synthase subunit alpha 2 from Listeria welshimeri serovar 6b (strain ATCC 35897 / DSM 20650 / CCUG 15529 / CIP 8149 / NCTC 11857 / SLCC 5334 / V8).